The primary structure comprises 118 residues: Large ribosomal subunit protein bL17 (118 aa).

This sequence belongs to the bacterial ribosomal protein bL17 family. As to quaternary structure, part of the 50S ribosomal subunit. Contacts protein L32.

In Campylobacter concisus (strain 13826), this protein is Large ribosomal subunit protein bL17.